Consider the following 682-residue polypeptide: DNA-directed RNA polymerase subunit beta' (682 aa).

Zn(2+) contacts are provided by C69, C71, C87, and C90. Mg(2+) contacts are provided by D489, D491, and D493.

It belongs to the RNA polymerase beta' chain family. RpoC1 subfamily. In terms of assembly, in plastids the minimal PEP RNA polymerase catalytic core is composed of four subunits: alpha, beta, beta', and beta''. When a (nuclear-encoded) sigma factor is associated with the core the holoenzyme is formed, which can initiate transcription. It depends on Mg(2+) as a cofactor. Zn(2+) is required as a cofactor.

Its subcellular location is the plastid. The protein localises to the chloroplast. The enzyme catalyses RNA(n) + a ribonucleoside 5'-triphosphate = RNA(n+1) + diphosphate. DNA-dependent RNA polymerase catalyzes the transcription of DNA into RNA using the four ribonucleoside triphosphates as substrates. This is DNA-directed RNA polymerase subunit beta' from Brachypodium distachyon (Purple false brome).